Here is a 489-residue protein sequence, read N- to C-terminus: RNA polymerase II subunit 5-mediating protein homolog (489 aa).

Disordered regions lie at residues 141-188 (NSDE…MDEE), 200-329 (EEKE…EEDE), 396-415 (ILKT…SYNE), and 434-489 (FENQ…RQNK). The segment covering 157–168 (QKSTTTTTTTTT) has biased composition (low complexity). Basic and acidic residues-rich tracts occupy residues 169–188 (SKDK…MDEE) and 215–224 (FNKKFNKKLD). 3 stretches are compositionally biased toward acidic residues: residues 227–265 (GSDE…EDEK), 276–298 (EEDD…EYYD), and 315–329 (QGDD…EEDE). A compositionally biased stretch (polar residues) spans 396–413 (ILKTNSSGNLMSTIPKSY). Basic residues predominate over residues 480–489 (SRFKSSRQNK).

This sequence belongs to the RNA polymerase II subunit 5-mediating protein family.

It localises to the nucleus. The polypeptide is RNA polymerase II subunit 5-mediating protein homolog (rmp) (Dictyostelium discoideum (Social amoeba)).